The sequence spans 502 residues: UDP-N-acetylmuramoylalanine--D-glutamate ligase (502 aa).

136–142 (GTNGKTT) lines the ATP pocket.

It belongs to the MurCDEF family.

It is found in the cytoplasm. It catalyses the reaction UDP-N-acetyl-alpha-D-muramoyl-L-alanine + D-glutamate + ATP = UDP-N-acetyl-alpha-D-muramoyl-L-alanyl-D-glutamate + ADP + phosphate + H(+). It functions in the pathway cell wall biogenesis; peptidoglycan biosynthesis. In terms of biological role, cell wall formation. Catalyzes the addition of glutamate to the nucleotide precursor UDP-N-acetylmuramoyl-L-alanine (UMA). The protein is UDP-N-acetylmuramoylalanine--D-glutamate ligase of Corynebacterium jeikeium (strain K411).